The sequence spans 438 residues: Histidinol dehydrogenase (438 aa).

NAD(+)-binding residues include Tyr-137, Gln-198, and Asn-221. Substrate is bound by residues Ser-244, Gln-266, and His-269. Residues Gln-266 and His-269 each contribute to the Zn(2+) site. Active-site proton acceptor residues include Glu-334 and His-335. His-335, Asp-368, Glu-422, and His-427 together coordinate substrate. Asp-368 contributes to the Zn(2+) binding site. His-427 contributes to the Zn(2+) binding site.

This sequence belongs to the histidinol dehydrogenase family. The cofactor is Zn(2+).

It catalyses the reaction L-histidinol + 2 NAD(+) + H2O = L-histidine + 2 NADH + 3 H(+). It participates in amino-acid biosynthesis; L-histidine biosynthesis; L-histidine from 5-phospho-alpha-D-ribose 1-diphosphate: step 9/9. Functionally, catalyzes the sequential NAD-dependent oxidations of L-histidinol to L-histidinaldehyde and then to L-histidine. The polypeptide is Histidinol dehydrogenase (Aromatoleum aromaticum (strain DSM 19018 / LMG 30748 / EbN1) (Azoarcus sp. (strain EbN1))).